The following is a 554-amino-acid chain: uncharacterized protein (554 aa).

The tract at residues 1–25 (MSSSIPPRLYDMSPTESKKQEDVSE) is disordered. Residue serine 13 is modified to Phosphoserine. The next 6 membrane-spanning stretches (helical) occupy residues 82-102 (FFVA…TSLI), 120-140 (APYL…VWSL), 149-169 (WAFN…GASP), 171-191 (FASI…NLPV), 210-230 (VMSF…WGLI), and 253-273 (FLFT…LVSV). Serine 334 carries the phosphoserine modification. A run of 6 helical transmembrane segments spans residues 364–384 (LAIS…AFPL), 412–432 (SLIV…LVEF), 437–457 (KGTL…STTA), 462–482 (AYLG…GVLY), 497–517 (AVGL…VIAM), and 525–545 (APIF…VFFP).

It belongs to the major facilitator superfamily.

It localises to the endoplasmic reticulum. It is found in the membrane. This is an uncharacterized protein from Schizosaccharomyces pombe (strain 972 / ATCC 24843) (Fission yeast).